Consider the following 495-residue polypeptide: RuBisCO large subunit-binding protein subunit alpha (495 aa).

The protein belongs to the chaperonin (HSP60) family. As to quaternary structure, oligomer of probably six alpha and six beta subunits.

Its subcellular location is the plastid. It is found in the chloroplast. This protein binds RuBisCO small and large subunits and is implicated in the assembly of the enzyme oligomer. In Ricinus communis (Castor bean), this protein is RuBisCO large subunit-binding protein subunit alpha.